We begin with the raw amino-acid sequence, 399 residues long: F-box protein At1g30790 (399 aa).

The F-box domain maps to 3-49 (RQEIDHIPFDLTVEILTRLPAKSLMKFKCVSKLWSSIIHNQSFIDSF).

This chain is F-box protein At1g30790, found in Arabidopsis thaliana (Mouse-ear cress).